Here is a 491-residue protein sequence, read N- to C-terminus: MTFQQNEPSAVPAQSSLSFTQGFLLGQLSVVLLIGAFIKFFIFGEAPPPPSRGLSHRASTHRRSNSIYTINPNEGTSRSLREKPSTSNVLRPVPSSATNTRSILRKTYYSAIPTNPSGKHGRHRIHHSSHQPESLDWFNVLIAQTIAQYRQTAYLLKDDPTSSILSSLTAALNNPEKKPSFIDKIAVTDISLGEEFPIFSNCRIIAVDDPNSDGGRLQALLDVDLSDDNLSIAVETSLLLNYPKPCSAILPVALSISIVRFSGTLCISLVPASTPPLHTPSPSPSPPTADGAVNAGIHPTNGSREPTQEAPNAQEESPPKTSPKSNVAFSFLPDYRLDLSVRSLIGSRSRLQDVPKVAQLVEARVHSWFEERVVEPRVQVVGLPDLWPRMGRTGVRTGEDSETGSNAASRSAMSADMGNSLRADDIGREPDGLRFRGLGARPPFDSVSRTSSFNVETGGFRSHSMTREGSGGGMSDDFHMPGTLPGGAAAN.

Over Met1–Gly22 the chain is Lumenal. A helical transmembrane segment spans residues Phe23–Phe43. Topologically, residues Gly44–Asn491 are cytoplasmic. Disordered regions lie at residues Pro50–Ser95, Pro275–Ser325, and Arg392–Asn491. The span at Leu54 to Ser64 shows a compositional bias: basic residues. Polar residues-rich tracts occupy residues Asn65–Arg78 and Ser85–Ser95. In terms of domain architecture, SMP-LTD spans Gln131–Pro384. Over residues Pro275–Pro287 the composition is skewed to pro residues. 2 stretches are compositionally biased toward polar residues: residues Thr300–Glu315 and Thr403–Ala412. A compositionally biased stretch (basic and acidic residues) spans Arg422–Arg434.

Belongs to the MMM1 family. In terms of assembly, homodimer. Component of the ER-mitochondria encounter structure (ERMES) or MDM complex, composed of mmm1, mdm10, mdm12 and mdm34. A mmm1 homodimer associates with one molecule of mdm12 on each side in a pairwise head-to-tail manner, and the SMP-LTD domains of mmm1 and mdm12 generate a continuous hydrophobic tunnel for phospholipid trafficking.

It localises to the endoplasmic reticulum membrane. In terms of biological role, component of the ERMES/MDM complex, which serves as a molecular tether to connect the endoplasmic reticulum (ER) and mitochondria. Components of this complex are involved in the control of mitochondrial shape and protein biogenesis, and function in nonvesicular lipid trafficking between the ER and mitochondria. The mdm12-mmm1 subcomplex functions in the major beta-barrel assembly pathway that is responsible for biogenesis of all outer membrane beta-barrel proteins, and acts in a late step after the SAM complex. The mdm10-mdm12-mmm1 subcomplex further acts in the TOM40-specific pathway after the action of the mdm12-mmm1 complex. Essential for establishing and maintaining the structure of mitochondria and maintenance of mtDNA nucleoids. This is Maintenance of mitochondrial morphology protein 1 from Aspergillus flavus (strain ATCC 200026 / FGSC A1120 / IAM 13836 / NRRL 3357 / JCM 12722 / SRRC 167).